The primary structure comprises 162 residues: MTAIQHFFKTFFLTELLKGLALTGRYTFRRKFTVQFPEEKTPISPRFRGLHALRRYENGEERCIACKLCEAVCPAMAITIESETRADNTRRTTRYDIDLTKCIFCGFCEESCPVDSIVETQILEYHGEKRGDLYFTKEMLLAVGDRYEKDIAAAKAADAPYR.

4Fe-4S ferredoxin-type domains are found at residues 54-83 (RRYE…IESE) and 93-122 (TRYD…ETQI). [4Fe-4S] cluster-binding residues include cysteine 63, cysteine 66, cysteine 69, cysteine 73, cysteine 102, cysteine 105, cysteine 108, and cysteine 112.

Belongs to the complex I 23 kDa subunit family. In terms of assembly, NDH-1 is composed of 14 different subunits. Subunits NuoA, H, J, K, L, M, N constitute the membrane sector of the complex. [4Fe-4S] cluster serves as cofactor.

The protein localises to the cell inner membrane. It catalyses the reaction a quinone + NADH + 5 H(+)(in) = a quinol + NAD(+) + 4 H(+)(out). In terms of biological role, NDH-1 shuttles electrons from NADH, via FMN and iron-sulfur (Fe-S) centers, to quinones in the respiratory chain. The immediate electron acceptor for the enzyme in this species is believed to be ubiquinone. Couples the redox reaction to proton translocation (for every two electrons transferred, four hydrogen ions are translocated across the cytoplasmic membrane), and thus conserves the redox energy in a proton gradient. This chain is NADH-quinone oxidoreductase subunit I, found in Burkholderia vietnamiensis (strain G4 / LMG 22486) (Burkholderia cepacia (strain R1808)).